A 511-amino-acid chain; its full sequence is MDVCGWKEMEVALVNFDNSDEIQEEPGYATDFDSTSPKGRPGGSSFSNGKILISESTNHETAFSKLPGDYADPPGPEPVVLNEGNQRVIINIAGLRFETQLRTLSQFPETLLGDREKRMQFFDSMRNEYFFDRNRPSFDGILYYYQSGGKIRRPANVPIDIFADEISFYELGSEAMDQFREDEGFIKDPETLLPTNDIHRQFWLLFEYPESSSAARAVAVVSVLVVVISITIFCLETLPEFREDRELKVVRDPNLNMSKTVLSQTMFTDPFFMVESTCIVWFTFELVLRFVVCPSKTDFFRNIMNIIDIISIIPYFATLITELVQETEPSAQQNMSLAILRIIRLVRVFRIFKLSRHSKGLQILGQTLKASMRELGLLIFFLFIGVILFSSAVYFAEVDEPESHFSSIPDGFWWAVVTMTTVGYGDMCPTTPGGKIVGTLCAIAGVLTIALPVPVIVSNFNYFYHRETENEEKQNIPGEIERILNSVGSRMGSTDSLNKTNGGCSTEKSRK.

The disordered stretch occupies residues 22 to 50 (IQEEPGYATDFDSTSPKGRPGGSSFSNGK). Residues 218 to 238 (VAVVSVLVVVISITIFCLETL) form a helical membrane-spanning segment. N-linked (GlcNAc...) asparagine glycosylation is present at asparagine 256. A helical membrane pass occupies residues 271-292 (FFMVESTCIVWFTFELVLRFVV). Cysteine 293 is lipidated: S-palmitoyl cysteine. The chain crosses the membrane as a helical span at residues 303–323 (IMNIIDIISIIPYFATLITEL). A glycan (N-linked (GlcNAc...) asparagine) is linked at asparagine 334. Residues 339–358 (ILRIIRLVRVFRIFKLSRHS) form a helical; Voltage-sensor membrane-spanning segment. Residues 375 to 395 (LGLLIFFLFIGVILFSSAVYF) form a helical membrane-spanning segment. The Selectivity filter signature appears at 421 to 426 (TVGYGD). Residues 436-456 (IVGTLCAIAGVLTIALPVPVI) traverse the membrane as a helical segment. The interval 489 to 511 (SRMGSTDSLNKTNGGCSTEKSRK) is disordered. Asparagine 498 carries N-linked (GlcNAc...) asparagine glycosylation.

It belongs to the potassium channel family. A (Shaker) (TC 1.A.1.2) subfamily. Kv1.8/KCNA10 sub-subfamily. As to quaternary structure, homotetramer. Interacts with KCN4B/POMP. Interaction with KCN4B/POMP is necessary for the modulation of channel activity by cAMP. As to expression, detected in kidney, in proximal tubules, glomerular endothelium, in vascular endothelium and in smooth muscle cells.

The protein resides in the membrane. The enzyme catalyses K(+)(in) = K(+)(out). The channel activity is up-regulated by cAMP. Functionally, voltage-gated potassium ion channel that mediates K(+) permeability of excitable membranes. When opened in response to the voltage difference across the membrane, KCNA10 channel selectively allows the flow of potassium ions across the membrane down their electrochemical gradient. The polypeptide is Potassium voltage-gated channel subfamily A member 10 (Homo sapiens (Human)).